The primary structure comprises 498 residues: Germ cell-less protein-like 2 (498 aa).

The Nuclear localization signal signature appears at 33 to 39 (SRKRKRN). In terms of domain architecture, BTB spans 90–160 (SDIKIRALGR…LYTDADLSIT (71 aa)).

As to quaternary structure, interacts with CUL3.

It is found in the nucleus matrix. The protein operates within protein modification; protein ubiquitination. In terms of biological role, possible function in spermatogenesis. Probable substrate-specific adapter of an E3 ubiquitin-protein ligase complex which mediates the ubiquitination and subsequent proteasomal degradation of target proteins. This chain is Germ cell-less protein-like 2 (Gmcl2), found in Mus musculus (Mouse).